The sequence spans 806 residues: NADH-quinone oxidoreductase subunit G (806 aa).

Positions 15 to 93 constitute a 2Fe-2S ferredoxin-type domain; it reads EMVTLTIDGV…DMVVRTQLTS (79 aa). The [2Fe-2S] cluster site is built by Cys-49, Cys-60, Cys-63, and Cys-77. In terms of domain architecture, 4Fe-4S His(Cys)3-ligated-type spans 95 to 134; sequence IADKAQHGVMELLLINHPLDCPMCDKGGECPLQNQAMSNG. 12 residues coordinate [4Fe-4S] cluster: His-111, Cys-115, Cys-118, Cys-124, Cys-164, Cys-167, Cys-170, Cys-214, Cys-240, Cys-243, Cys-247, and Cys-275. Residues 233–289 form the 4Fe-4S Mo/W bis-MGD-type domain; sequence LVSSPSVCEHCASGCAQRTDHRRGKVLRRLAGDDPEVNEEWNCDKGRWAFTYATQPD.

It belongs to the complex I 75 kDa subunit family. The cofactor is [2Fe-2S] cluster. It depends on [4Fe-4S] cluster as a cofactor.

It carries out the reaction a quinone + NADH + 5 H(+)(in) = a quinol + NAD(+) + 4 H(+)(out). NDH-1 shuttles electrons from NADH, via FMN and iron-sulfur (Fe-S) centers, to quinones in the respiratory chain. The immediate electron acceptor for the enzyme in this species is believed to be menaquinone. Couples the redox reaction to proton translocation (for every two electrons transferred, four hydrogen ions are translocated across the cytoplasmic membrane), and thus conserves the redox energy in a proton gradient. This Mycobacterium bovis (strain ATCC BAA-935 / AF2122/97) protein is NADH-quinone oxidoreductase subunit G (nuoG).